The sequence spans 583 residues: Aspartate--tRNA ligase (583 aa).

Glu173 serves as a coordination point for L-aspartate. Residues Gln197 to Lys200 form an aspartate region. Residue Arg219 participates in L-aspartate binding. Residues Arg219–Glu221 and Gln228 contribute to the ATP site. His444 contacts L-aspartate. Glu478 is a binding site for ATP. Arg485 lines the L-aspartate pocket. Gly530–Arg533 contacts ATP.

Belongs to the class-II aminoacyl-tRNA synthetase family. Type 1 subfamily. In terms of assembly, homodimer.

Its subcellular location is the cytoplasm. The enzyme catalyses tRNA(Asp) + L-aspartate + ATP = L-aspartyl-tRNA(Asp) + AMP + diphosphate. Functionally, catalyzes the attachment of L-aspartate to tRNA(Asp) in a two-step reaction: L-aspartate is first activated by ATP to form Asp-AMP and then transferred to the acceptor end of tRNA(Asp). The protein is Aspartate--tRNA ligase of Azobacteroides pseudotrichonymphae genomovar. CFP2.